The chain runs to 220 residues: ATP phosphoribosyltransferase (220 aa).

It belongs to the ATP phosphoribosyltransferase family. Short subfamily. In terms of assembly, heteromultimer composed of HisG and HisZ subunits.

The protein localises to the cytoplasm. The enzyme catalyses 1-(5-phospho-beta-D-ribosyl)-ATP + diphosphate = 5-phospho-alpha-D-ribose 1-diphosphate + ATP. Its pathway is amino-acid biosynthesis; L-histidine biosynthesis; L-histidine from 5-phospho-alpha-D-ribose 1-diphosphate: step 1/9. Its function is as follows. Catalyzes the condensation of ATP and 5-phosphoribose 1-diphosphate to form N'-(5'-phosphoribosyl)-ATP (PR-ATP). Has a crucial role in the pathway because the rate of histidine biosynthesis seems to be controlled primarily by regulation of HisG enzymatic activity. The polypeptide is ATP phosphoribosyltransferase (Prochlorococcus marinus (strain NATL1A)).